We begin with the raw amino-acid sequence, 843 residues long: Leucine--tRNA ligase (843 aa).

The 'HIGH' region signature appears at 61 to 71 (PYPSGDLHMGH). The short motif at 606-610 (AMSKS) is the 'KMSKS' region element. Position 609 (Lys-609) interacts with ATP.

Belongs to the class-I aminoacyl-tRNA synthetase family.

Its subcellular location is the cytoplasm. It carries out the reaction tRNA(Leu) + L-leucine + ATP = L-leucyl-tRNA(Leu) + AMP + diphosphate. The polypeptide is Leucine--tRNA ligase (Arthrobacter sp. (strain FB24)).